Consider the following 117-residue polypeptide: Large ribosomal subunit protein bL20 (117 aa).

Belongs to the bacterial ribosomal protein bL20 family.

In terms of biological role, binds directly to 23S ribosomal RNA and is necessary for the in vitro assembly process of the 50S ribosomal subunit. It is not involved in the protein synthesizing functions of that subunit. This Wolinella succinogenes (strain ATCC 29543 / DSM 1740 / CCUG 13145 / JCM 31913 / LMG 7466 / NCTC 11488 / FDC 602W) (Vibrio succinogenes) protein is Large ribosomal subunit protein bL20.